Here is a 759-residue protein sequence, read N- to C-terminus: Xaa-Pro dipeptidyl-peptidase (759 aa).

Catalysis depends on charge relay system residues Ser-347, Asp-467, and His-497.

This sequence belongs to the peptidase S15 family. As to quaternary structure, homodimer.

The protein resides in the cytoplasm. The catalysed reaction is Hydrolyzes Xaa-Pro-|- bonds to release unblocked, N-terminal dipeptides from substrates including Ala-Pro-|-p-nitroanilide and (sequentially) Tyr-Pro-|-Phe-Pro-|-Gly-Pro-|-Ile.. Removes N-terminal dipeptides sequentially from polypeptides having unsubstituted N-termini provided that the penultimate residue is proline. This is Xaa-Pro dipeptidyl-peptidase from Streptococcus gordonii (strain Challis / ATCC 35105 / BCRC 15272 / CH1 / DL1 / V288).